Consider the following 658-residue polypeptide: Glycogen debranching enzyme (658 aa).

D336 (nucleophile) is an active-site residue. E371 (proton donor) is an active-site residue. Residues 459 to 484 (EANGEENRDGTNSNYSDNHGKEGLGG) are disordered.

The protein belongs to the glycosyl hydrolase 13 family.

The catalysed reaction is Hydrolysis of (1-&gt;6)-alpha-D-glucosidic linkages to branches with degrees of polymerization of three or four glucose residues in limit dextrin.. The protein operates within glycan degradation; glycogen degradation. Removes maltotriose and maltotetraose chains that are attached by 1,6-alpha-linkage to the limit dextrin main chain, generating a debranched limit dextrin. In Salmonella paratyphi A (strain ATCC 9150 / SARB42), this protein is Glycogen debranching enzyme.